Consider the following 949-residue polypeptide: ATPase 6, plasma membrane-type (949 aa).

Topologically, residues 1–64 (MAADISWDEI…EKVENKFLKF (64 aa)) are cytoplasmic. A helical transmembrane segment spans residues 65–84 (LGFMWNPLSWVMEAAAIMAI). Over 85-96 (VLANGGGRPPDW) the chain is Extracellular. The chain crosses the membrane as a helical span at residues 97-117 (QDFVGITCLLIINSTISFIEE). Residues 118–246 (NNAGNAAAAL…GHFQKVLTAI (129 aa)) are Cytoplasmic-facing. Residues 247–267 (GNFCICSIGIGMLIEIIIMYP) form a helical membrane-spanning segment. The Extracellular portion of the chain corresponds to 268-276 (IQHRKYRDG). Residues 277–294 (IDNLLVLLIGGIPIAMPT) traverse the membrane as a helical segment. Topologically, residues 295 to 645 (VLSVTMAIGS…TSRAIFQRMK (351 aa)) are cytoplasmic. Aspartate 332 (4-aspartylphosphate intermediate) is an active-site residue. Aspartate 590 and aspartate 594 together coordinate Mg(2+). The chain crosses the membrane as a helical span at residues 646-667 (NYTIYAVSITIRIVLGFMLVAL). Over 668–672 (IWEFD) the chain is Extracellular. Residues 673 to 695 (FSPFMVLIIAILNDGTIMTISKD) form a helical membrane-spanning segment. The Cytoplasmic segment spans residues 696 to 711 (RVKPSPIPDSWKLKEI). A helical transmembrane segment spans residues 712-732 (FATGVVLGTYMALVTVVFFWL). The Extracellular portion of the chain corresponds to 733–753 (AHDTTFFSDKFGVRSLQGKDE). A helical membrane pass occupies residues 754–774 (ELIAVLYLQVSIISQALIFVT). Over 775-786 (RSRSWSFVERPG) the chain is Cytoplasmic. The chain crosses the membrane as a helical span at residues 787–807 (LLLLIAFFVAQLIATLIATYA). Over 808-815 (HWEFARIK) the chain is Extracellular. Residues 816–836 (GCGWGWCGVIWIYSIVTYIPL) traverse the membrane as a helical segment. Residues 837-949 (DILKFITRYT…IDNLNQHYTV (113 aa)) lie on the Cytoplasmic side of the membrane. Threonine 883 carries the phosphothreonine modification. A Phosphoserine modification is found at serine 931. The tract at residues 947 to 949 (YTV) is interaction with 14-3-3 proteins. Threonine 948 is subject to Phosphothreonine.

This sequence belongs to the cation transport ATPase (P-type) (TC 3.A.3) family. Type IIIA subfamily. In terms of assembly, binds to 14-3-3 proteins. The binding is induced by phosphorylation of Thr-948. Binding to 14-3-3 proteins activates the H(+)-ATPase. In terms of tissue distribution, expressed in guard cells.

It is found in the membrane. It catalyses the reaction ATP + H2O + H(+)(in) = ADP + phosphate + 2 H(+)(out). The plasma membrane H(+) ATPase of plants and fungi generates a proton gradient that drives the active transport of nutrients by H(+)-symport. The resulting external acidification and/or internal alkinization may mediate growth responses. This chain is ATPase 6, plasma membrane-type (AHA6), found in Arabidopsis thaliana (Mouse-ear cress).